The chain runs to 77 residues: Small ribosomal subunit protein uS17 (77 aa).

The protein belongs to the universal ribosomal protein uS17 family. Part of the 30S ribosomal subunit.

Functionally, one of the primary rRNA binding proteins, it binds specifically to the 5'-end of 16S ribosomal RNA. The sequence is that of Small ribosomal subunit protein uS17 from Rickettsia bellii (strain OSU 85-389).